A 438-amino-acid chain; its full sequence is MSKKQLVKTDGHNQLDQPNTKALQLKKKQFNSGVRVTSEISFLREVIAHHPGIETERVIDNQTFGSAMYLERAQKEHQLFIKILRQHGTKVHYLQDLLLEALSAADPNVRQDFIKNFLLESGIKSVSTFEACLNFFRSLDSLVDVIKVMFGGIKVSDVPPITPQRFADIHVSNSPFLIKPLSFSLYPHKFFNTLGTGVALFVTNDSELKRHSLVYEYIMRFHPRFDGVKLYTNRDFKNCLINSSDIIQISNEILLIGISHDTDVLGIESLARNLLSDHTNPIKQIIAINIHKFGAKTNLNKLIAMVDVDKFIIARKVLQATEIFELTATAQRDVDGLAQIKFKPLKFNFGEIIEAIIDKQPRFVIIGGGDEVAERKELLDCGMGVLNLSPGEIVVFDRNHYTNNLLNELGLIIHKIPASELSRGPSGPLEMVCSLWRE.

This sequence belongs to the arginine deiminase family.

The protein is Arginine deiminase-like protein of Mycoplasma pneumoniae (strain ATCC 29342 / M129 / Subtype 1) (Mycoplasmoides pneumoniae).